A 223-amino-acid chain; its full sequence is Ubiquitin-conjugating enzyme E2 S (223 aa).

Met-1 carries the post-translational modification N-acetylmethionine. Residues 11–157 form the UBC core domain; it reads HIIRLVYKEV…ARLLTEIHGG (147 aa). Cys-95 functions as the Glycyl thioester intermediate in the catalytic mechanism. The interval 155 to 223 is disordered; it reads HGGAGGPSGG…TDKKRALRRL (69 aa). Low complexity predominate over residues 169–195; that stretch reads GRATASGAAASTADPTAPGGPAGAEGP. A Phosphoserine modification is found at Ser-174. Over residues 209 to 223 the composition is skewed to basic residues; it reads AAKKKTDKKRALRRL.

Belongs to the ubiquitin-conjugating enzyme family. In terms of assembly, component of the APC/C complex, composed of at least 14 distinct subunits that assemble into a complex of at least 19 chains with a combined molecular mass of around 1.2 MDa. Within this complex, directly interacts with ANAPC2 and ANAPC4. Interacts with CDC20, FZR1/CDH1 and VHL. Autoubiquitinated by the APC/C complex during G1, leading to its degradation by the proteasome.

The catalysed reaction is S-ubiquitinyl-[E1 ubiquitin-activating enzyme]-L-cysteine + [E2 ubiquitin-conjugating enzyme]-L-cysteine = [E1 ubiquitin-activating enzyme]-L-cysteine + S-ubiquitinyl-[E2 ubiquitin-conjugating enzyme]-L-cysteine.. Its pathway is protein modification; protein ubiquitination. Functionally, accepts ubiquitin from the E1 complex and catalyzes its covalent attachment to other proteins. Catalyzes 'Lys-11'-linked polyubiquitination. Acts as an essential factor of the anaphase promoting complex/cyclosome (APC/C), a cell cycle-regulated ubiquitin ligase that controls progression through mitosis. Acts by specifically elongating 'Lys-11'-linked polyubiquitin chains initiated by the E2 enzyme UBE2C/UBCH10 on APC/C substrates, enhancing the degradation of APC/C substrates by the proteasome and promoting mitotic exit. Also acts by elongating ubiquitin chains initiated by the E2 enzyme UBE2D1/UBCH5 in vitro; it is however unclear whether UBE2D1/UBCH5 acts as an E2 enzyme for the APC/C in vivo. Also involved in ubiquitination and subsequent degradation of VHL, resulting in an accumulation of HIF1A. In vitro able to promote polyubiquitination using all 7 ubiquitin Lys residues, except 'Lys-48'-linked polyubiquitination. This chain is Ubiquitin-conjugating enzyme E2 S (UBE2S), found in Bos taurus (Bovine).